Reading from the N-terminus, the 92-residue chain is Probable Fe(2+)-trafficking protein (92 aa).

This sequence belongs to the Fe(2+)-trafficking protein family.

Could be a mediator in iron transactions between iron acquisition and iron-requiring processes, such as synthesis and/or repair of Fe-S clusters in biosynthetic enzymes. The sequence is that of Probable Fe(2+)-trafficking protein from Shewanella oneidensis (strain ATCC 700550 / JCM 31522 / CIP 106686 / LMG 19005 / NCIMB 14063 / MR-1).